A 234-amino-acid polypeptide reads, in one-letter code: Glucosamine-6-phosphate deaminase (234 aa).

Asp-62 functions as the Proton acceptor; for enolization step in the catalytic mechanism. Asn-128 serves as the catalytic For ring-opening step. His-130 serves as the catalytic Proton acceptor; for ring-opening step. Glu-135 serves as the catalytic For ring-opening step.

Belongs to the glucosamine/galactosamine-6-phosphate isomerase family. NagB subfamily.

The catalysed reaction is alpha-D-glucosamine 6-phosphate + H2O = beta-D-fructose 6-phosphate + NH4(+). It functions in the pathway amino-sugar metabolism; N-acetylneuraminate degradation; D-fructose 6-phosphate from N-acetylneuraminate: step 5/5. Catalyzes the reversible isomerization-deamination of glucosamine 6-phosphate (GlcN6P) to form fructose 6-phosphate (Fru6P) and ammonium ion. The protein is Glucosamine-6-phosphate deaminase of Ligilactobacillus salivarius (strain UCC118) (Lactobacillus salivarius).